The chain runs to 245 residues: MGRLDGKVIVLSAAAQGIGRAAAIAFAKEGAQVIATDVNEMKLKELEAYKGIQTRVLDVTKKDQIENLCKEIDRIDVLFNVAGFVHHGTILDCTEADWDFTMNVNVRSMYFMIKTFLPKMLAQKSGNIINMSSVASSIKGVVNRCVYSTSKAAVIGLTKSVASDFIDQGIRCNCICPGTVDTPSLRERIQARPDPEQALKDFLARQRTGRMATAEEVAHLCVYLASDESAYVTGNEHIIDGGWSL.

NAD(+)-binding positions include Gln-16–Ile-18, Asp-37, and Asp-58. Arg-144 is a substrate binding site. The active-site Proton acceptor is Tyr-147. NAD(+) contacts are provided by residues Lys-151 and Val-180–Ser-184. Substrate contacts are provided by Arg-188 and Arg-205.

Belongs to the short-chain dehydrogenases/reductases (SDR) family. Homotetramer.

Its subcellular location is the cytoplasm. It catalyses the reaction cis-4-hydroxy-L-proline + NAD(+) = 4-oxo-L-proline + NADH + H(+). The catalysed reaction is (R)-3-hydroxybutanoate + NAD(+) = acetoacetate + NADH + H(+). It participates in amino-acid metabolism. It functions in the pathway siderophore biosynthesis. In terms of biological role, NAD(H)-dependent dehydrogenase/reductase with a preference for cyclic substrates. Catalyzes stereoselective conversion of 4-oxo-L-proline to cis-4-hydroxy-L-proline, likely a detoxification mechanism for ketoprolines. Mediates the formation of 2,5-dihydroxybenzoate (2,5-DHBA), a siderophore that chelates free cytoplasmic iron, thereby regulating iron transport and homeostasis while protecting cells against free radical-induced oxidative stress. The iron-siderophore complex is imported into mitochondria, providing an iron source for mitochondrial metabolic processes in particular heme synthesis. May act as a 3-hydroxybutyrate dehydrogenase. The polypeptide is Dehydrogenase/reductase SDR family member 6 (bdh2) (Xenopus laevis (African clawed frog)).